The sequence spans 263 residues: Acyl-[acyl-carrier-protein]--UDP-N-acetylglucosamine O-acyltransferase (263 aa).

The protein belongs to the transferase hexapeptide repeat family. LpxA subfamily. Homotrimer.

The protein resides in the cytoplasm. The enzyme catalyses a (3R)-hydroxyacyl-[ACP] + UDP-N-acetyl-alpha-D-glucosamine = a UDP-3-O-[(3R)-3-hydroxyacyl]-N-acetyl-alpha-D-glucosamine + holo-[ACP]. It functions in the pathway glycolipid biosynthesis; lipid IV(A) biosynthesis; lipid IV(A) from (3R)-3-hydroxytetradecanoyl-[acyl-carrier-protein] and UDP-N-acetyl-alpha-D-glucosamine: step 1/6. Its function is as follows. Involved in the biosynthesis of lipid A, a phosphorylated glycolipid that anchors the lipopolysaccharide to the outer membrane of the cell. This chain is Acyl-[acyl-carrier-protein]--UDP-N-acetylglucosamine O-acyltransferase, found in Tolumonas auensis (strain DSM 9187 / NBRC 110442 / TA 4).